Reading from the N-terminus, the 447-residue chain is Cysteine--tRNA ligase (447 aa).

Cysteine 28 contacts Zn(2+). Residues 30-40 (PTVYNYIHIGN) carry the 'HIGH' region motif. The Zn(2+) site is built by cysteine 211, histidine 236, and glutamate 240. The 'KMSKS' region signature appears at 268 to 272 (KMSKS). ATP is bound at residue lysine 271.

The protein belongs to the class-I aminoacyl-tRNA synthetase family. As to quaternary structure, monomer. The cofactor is Zn(2+).

It is found in the cytoplasm. The catalysed reaction is tRNA(Cys) + L-cysteine + ATP = L-cysteinyl-tRNA(Cys) + AMP + diphosphate. In Streptococcus pyogenes serotype M18 (strain MGAS8232), this protein is Cysteine--tRNA ligase.